Here is a 508-residue protein sequence, read N- to C-terminus: 2-isopropylmalate synthase (508 aa).

In terms of domain architecture, Pyruvate carboxyltransferase spans 5–267 (IKIFDTTLRD…THRIDTTQIY (263 aa)). Positions 14, 202, 204, and 238 each coordinate Mn(2+). Residues 390–508 (VIDSFQINSG…SEIGESIISQ (119 aa)) form a regulatory domain region.

It belongs to the alpha-IPM synthase/homocitrate synthase family. LeuA type 1 subfamily. In terms of assembly, homodimer. Mn(2+) serves as cofactor.

Its subcellular location is the cytoplasm. It carries out the reaction 3-methyl-2-oxobutanoate + acetyl-CoA + H2O = (2S)-2-isopropylmalate + CoA + H(+). Its pathway is amino-acid biosynthesis; L-leucine biosynthesis; L-leucine from 3-methyl-2-oxobutanoate: step 1/4. In terms of biological role, catalyzes the condensation of the acetyl group of acetyl-CoA with 3-methyl-2-oxobutanoate (2-ketoisovalerate) to form 3-carboxy-3-hydroxy-4-methylpentanoate (2-isopropylmalate). This chain is 2-isopropylmalate synthase, found in Ruminiclostridium cellulolyticum (strain ATCC 35319 / DSM 5812 / JCM 6584 / H10) (Clostridium cellulolyticum).